The primary structure comprises 356 residues: Arginine kinase (356 aa).

N-acetylalanine is present on Ala2. Residues 9–91 enclose the Phosphagen kinase N-terminal domain; it reads KLEEGFKKLE…FDPIIEDYHK (83 aa). An L-arginine-binding site is contributed by 64 to 68; the sequence is GVGIY. The Phosphagen kinase C-terminal domain maps to 119–356; it reads FVISTRVRCG…LELIKIEKEM (238 aa). ATP-binding positions include 122–126 and His185; that span reads STRVR. Glu225 lines the L-arginine pocket. Position 229 (Arg229) interacts with ATP. Cys271 contributes to the L-arginine binding site. ATP is bound by residues 280-284 and 309-314; these read RASVH and RGTRGE. Residue Glu314 coordinates L-arginine.

The protein belongs to the ATP:guanido phosphotransferase family.

The catalysed reaction is L-arginine + ATP = N(omega)-phospho-L-arginine + ADP + H(+). This Homarus gammarus (European lobster) protein is Arginine kinase.